A 149-amino-acid polypeptide reads, in one-letter code: Transcriptional repressor NrdR (149 aa).

A zinc finger lies at 3–34 (CPFCSATDTKVIDSRLVADGHQVRRRRECVQC). Residues 49-139 (PRVVKQDGSR…VYRAFEDVSE (91 aa)) enclose the ATP-cone domain.

The protein belongs to the NrdR family. It depends on Zn(2+) as a cofactor.

Negatively regulates transcription of bacterial ribonucleotide reductase nrd genes and operons by binding to NrdR-boxes. The sequence is that of Transcriptional repressor NrdR from Shewanella halifaxensis (strain HAW-EB4).